The primary structure comprises 178 residues: Actin-related protein 2/3 complex subunit 3-B (178 aa).

The protein belongs to the ARPC3 family. As to quaternary structure, component of the Arp2/3 complex composed of actr2/arp2, actr3/arp3, arpc1 (arpc1a or arpc1b), arpc2, arpc3, arpc4 and arpc5.

The protein resides in the cytoplasm. It is found in the cytoskeleton. The protein localises to the cell projection. It localises to the nucleus. In terms of biological role, component of the Arp2/3 complex, a multiprotein complex that mediates actin polymerization upon stimulation by nucleation-promoting factor (NPF). The Arp2/3 complex mediates the formation of branched actin networks in the cytoplasm, providing the force for cell motility. In addition to its role in the cytoplasmic cytoskeleton, the Arp2/3 complex also promotes actin polymerization in the nucleus, thereby regulating gene transcription and repair of damaged DNA. The Arp2/3 complex promotes homologous recombination (HR) repair in response to DNA damage by promoting nuclear actin polymerization, leading to drive motility of double-strand breaks (DSBs). The chain is Actin-related protein 2/3 complex subunit 3-B (arpc3-b) from Xenopus laevis (African clawed frog).